The chain runs to 124 residues: Urocortin (124 aa).

Positions 1-25 (MRQAGRAALLAALLLLVQLCPGSSQ) are cleaved as a signal peptide. A disordered region spans residues 23–46 (SSQRSPEAAGVQDPSLRWSPGARN). Positions 26–82 (RSPEAAGVQDPSLRWSPGARNQGGGARALLLLLAERFPRRAGPGRLGLGTAGERPRR) are excised as a propeptide. At Val-122 the chain carries Valine amide.

The protein belongs to the sauvagine/corticotropin-releasing factor/urotensin I family. In terms of assembly, interacts with CRHR1 and CRHR2 (via their N-terminal extracellular domain). In terms of tissue distribution, keratinocytes in epidermis and the outer and inner root sheaths of hair follicles, epithelium of sebaceous and sweat glands, erector pili muscle, cutaneous blood vessel walls, cutaneous nerves and dermal mononuclear cells. Detected in plasma cells in the lamia propria in colon mucosa (at protein level). Expressed in pituitary and adrenal glands. Detected in plasma cells in the lamia propria in colon mucosa.

Its subcellular location is the secreted. Its function is as follows. Acts in vitro to stimulate the secretion of adrenocorticotropic hormone (ACTH). Binds with high affinity to CRF receptor types 1, 2-alpha, and 2-beta. Plays a role in the establishment of normal hearing thresholds. Reduces food intake and regulates ghrelin levels in gastric body and plasma. This Homo sapiens (Human) protein is Urocortin (UCN).